A 381-amino-acid polypeptide reads, in one-letter code: Arginine biosynthesis bifunctional protein ArgJ (381 aa).

Residues Thr-143, Lys-165, Thr-176, Glu-255, Asn-376, and Thr-381 each contribute to the substrate site. Thr-176 (nucleophile) is an active-site residue.

Belongs to the ArgJ family. Heterotetramer of two alpha and two beta chains.

It is found in the cytoplasm. The catalysed reaction is N(2)-acetyl-L-ornithine + L-glutamate = N-acetyl-L-glutamate + L-ornithine. It carries out the reaction L-glutamate + acetyl-CoA = N-acetyl-L-glutamate + CoA + H(+). It functions in the pathway amino-acid biosynthesis; L-arginine biosynthesis; L-ornithine and N-acetyl-L-glutamate from L-glutamate and N(2)-acetyl-L-ornithine (cyclic): step 1/1. Its pathway is amino-acid biosynthesis; L-arginine biosynthesis; N(2)-acetyl-L-ornithine from L-glutamate: step 1/4. In terms of biological role, catalyzes two activities which are involved in the cyclic version of arginine biosynthesis: the synthesis of N-acetylglutamate from glutamate and acetyl-CoA as the acetyl donor, and of ornithine by transacetylation between N(2)-acetylornithine and glutamate. This chain is Arginine biosynthesis bifunctional protein ArgJ, found in Thermus thermophilus (strain ATCC BAA-163 / DSM 7039 / HB27).